The chain runs to 779 residues: Subtilisin-like protease SBT3.18 (779 aa).

A signal peptide spans 1–21 (MYFWVMFFTLMIKVKLYITNG). Residues 22–109 (DIFQNRPTVY…VFKSKSLKLH (88 aa)) constitute a propeptide, activation peptide. In terms of domain architecture, Inhibitor I9 spans 30 to 109 (VYVVYLGANR…VFKSKSLKLH (80 aa)). A glycan (N-linked (GlcNAc...) asparagine) is linked at N84. The 509-residue stretch at 113–621 (SWDFLGLAVD…AGHINPLKAM (509 aa)) folds into the Peptidase S8 domain. Catalysis depends on charge relay system residues D144 and H221. N-linked (GlcNAc...) asparagine glycans are attached at residues N236 and N406. S553 acts as the Charge relay system in catalysis.

This sequence belongs to the peptidase S8 family.

The protein localises to the secreted. In Arabidopsis thaliana (Mouse-ear cress), this protein is Subtilisin-like protease SBT3.18.